A 152-amino-acid polypeptide reads, in one-letter code: SsrA-binding protein (152 aa).

Belongs to the SmpB family.

The protein resides in the cytoplasm. Required for rescue of stalled ribosomes mediated by trans-translation. Binds to transfer-messenger RNA (tmRNA), required for stable association of tmRNA with ribosomes. tmRNA and SmpB together mimic tRNA shape, replacing the anticodon stem-loop with SmpB. tmRNA is encoded by the ssrA gene; the 2 termini fold to resemble tRNA(Ala) and it encodes a 'tag peptide', a short internal open reading frame. During trans-translation Ala-aminoacylated tmRNA acts like a tRNA, entering the A-site of stalled ribosomes, displacing the stalled mRNA. The ribosome then switches to translate the ORF on the tmRNA; the nascent peptide is terminated with the 'tag peptide' encoded by the tmRNA and targeted for degradation. The ribosome is freed to recommence translation, which seems to be the essential function of trans-translation. The polypeptide is SsrA-binding protein (Persephonella marina (strain DSM 14350 / EX-H1)).